We begin with the raw amino-acid sequence, 117 residues long: Large ribosomal subunit protein bL19 (117 aa).

The protein belongs to the bacterial ribosomal protein bL19 family.

Its function is as follows. This protein is located at the 30S-50S ribosomal subunit interface and may play a role in the structure and function of the aminoacyl-tRNA binding site. This chain is Large ribosomal subunit protein bL19, found in Bacteroides thetaiotaomicron (strain ATCC 29148 / DSM 2079 / JCM 5827 / CCUG 10774 / NCTC 10582 / VPI-5482 / E50).